The sequence spans 314 residues: Protein translocase subunit SecF (314 aa).

Helical transmembrane passes span 17-37 (AVAV…TRGL), 137-157 (QGTY…WWRY), 158-178 (ELNF…ITLG), 188-210 (SLPV…IVVF), 250-270 (TLIV…GFAF), and 272-292 (LLVG…LLLV).

Belongs to the SecD/SecF family. SecF subfamily. Forms a complex with SecD. Part of the essential Sec protein translocation apparatus which comprises SecA, SecYEG and auxiliary proteins SecDF. Other proteins may also be involved.

It is found in the cell inner membrane. Its function is as follows. Part of the Sec protein translocase complex. Interacts with the SecYEG preprotein conducting channel. SecDF uses the proton motive force (PMF) to complete protein translocation after the ATP-dependent function of SecA. The sequence is that of Protein translocase subunit SecF from Desulfurispirillum indicum (strain ATCC BAA-1389 / DSM 22839 / S5).